Consider the following 221-residue polypeptide: MGQKSSKVHITKTDRAILEVKRSKDEIHKFTRRTDNLILVEKSQLKDLIRKNPENYKSNMKVRFLLKRIHYQEHLLQQASDQLINLENMVSTLEFKMVEKQFINGLKNGNEILKKLNKEFSNVDELMDDVQDQIAYQNEINETLSRSLVGTSNYEDDLDKELDALESELNPEKMNNAKVANMPSTEGLPSLPQGEQTEQKEREEFATEERSDTKEPLALLS.

G2 carries the N-myristoyl glycine lipid modification. Positions 72-178 form a coiled coil; sequence QEHLLQQASD…LNPEKMNNAK (107 aa). The interval 170–221 is disordered; it reads NPEKMNNAKVANMPSTEGLPSLPQGEQTEQKEREEFATEERSDTKEPLALLS. A compositionally biased stretch (basic and acidic residues) spans 197 to 215; that stretch reads TEQKEREEFATEERSDTKE.

The protein belongs to the SNF7 family. In terms of assembly, core component of the ESCRT-III complex (endosomal sorting required for transport complex III). ESCRT-III appears to be sequentially assembled as a flat lattice on the endosome membrane and forms a transient 450 kDa complex that contains DID4, oligomerized SNF7, VPS20 and VPS24. SNF7 oligomerization into a membrane-associated filament is nucleated by association of SNF7 with VPS20; the process is terminated through association of VPS24, possibly by capping the SNF7 filament. VPS24 subsequently associates with DID4/VPS2. Interacts with the VPS4. Interacts with VPS25; the interaction mediates the association with the ESCRT-II complex.

It is found in the endosome membrane. The protein resides in the vacuole membrane. Its function is as follows. Class E VPS protein implicated in concentration and sorting of cargo proteins of the multivesicular body (MVB) for incorporation into intralumenal vesicles. The lumenal sequestrated membrane proteins will be targeted into the vacuole after fusion of the endosome with the vacuole. Acts a component of the ESCRT-III complex, which appears to be critical for late steps in MVB sorting, such as membrane invagination and final cargo sorting and recruitment of late-acting components of the sorting machinery. The MVB pathway requires the sequential function of ESCRT-O, -I,-II and -III complex assemblies. Required for the oligomerization of SNF7 into a membrane-associated filament. The VPS20-SNF7 subcomplex is responsible for the membrane association of the ESCRT-III complex. Also required for the RIM101 repressor proteolytic activation. The sequence is that of Vacuolar protein sorting-associated protein 20 (VPS20) from Saccharomyces cerevisiae (strain ATCC 204508 / S288c) (Baker's yeast).